Here is a 185-residue protein sequence, read N- to C-terminus: MAEAKALPRFKKLYQDNIRKALLEEFKYDNEMQIPRITKVVLNMGVGEATGDSKKPAVAAEDLAMIAGQKAVVTRARNSIATFKLREGMPIGAKVTLRQDRMYEFLDRLITIALPRVRDFRGLNPKSFDGRGNYAMGIKEHIVFPEINYDKVDQIWGMDIIVCTTAKTDDEARSFLRAFNFPFRQ.

Belongs to the universal ribosomal protein uL5 family. Part of the 50S ribosomal subunit; part of the 5S rRNA/L5/L18/L25 subcomplex. Contacts the 5S rRNA and the P site tRNA. Forms a bridge to the 30S subunit in the 70S ribosome.

Functionally, this is one of the proteins that bind and probably mediate the attachment of the 5S RNA into the large ribosomal subunit, where it forms part of the central protuberance. In the 70S ribosome it contacts protein S13 of the 30S subunit (bridge B1b), connecting the 2 subunits; this bridge is implicated in subunit movement. Contacts the P site tRNA; the 5S rRNA and some of its associated proteins might help stabilize positioning of ribosome-bound tRNAs. This Brucella abortus (strain 2308) protein is Large ribosomal subunit protein uL5.